Consider the following 446-residue polypeptide: Exodeoxyribonuclease 7 large subunit (446 aa).

It belongs to the XseA family. In terms of assembly, heterooligomer composed of large and small subunits.

The protein localises to the cytoplasm. The catalysed reaction is Exonucleolytic cleavage in either 5'- to 3'- or 3'- to 5'-direction to yield nucleoside 5'-phosphates.. Functionally, bidirectionally degrades single-stranded DNA into large acid-insoluble oligonucleotides, which are then degraded further into small acid-soluble oligonucleotides. The sequence is that of Exodeoxyribonuclease 7 large subunit from Streptococcus agalactiae serotype III (strain NEM316).